A 305-amino-acid polypeptide reads, in one-letter code: Methionyl-tRNA formyltransferase (305 aa).

111–114 (SLLP) serves as a coordination point for (6S)-5,6,7,8-tetrahydrofolate.

Belongs to the Fmt family.

It catalyses the reaction L-methionyl-tRNA(fMet) + (6R)-10-formyltetrahydrofolate = N-formyl-L-methionyl-tRNA(fMet) + (6S)-5,6,7,8-tetrahydrofolate + H(+). Its function is as follows. Attaches a formyl group to the free amino group of methionyl-tRNA(fMet). The formyl group appears to play a dual role in the initiator identity of N-formylmethionyl-tRNA by promoting its recognition by IF2 and preventing the misappropriation of this tRNA by the elongation apparatus. In Campylobacter jejuni subsp. jejuni serotype O:23/36 (strain 81-176), this protein is Methionyl-tRNA formyltransferase.